The chain runs to 243 residues: NAD-dependent protein deacylase (243 aa).

The Deacetylase sirtuin-type domain maps to 1 to 234 (MYQHIVVLTG…PKLVDTILAG (234 aa)). 10–29 (GAGISAESGLRTFRDQDGLW) provides a ligand contact to NAD(+). The substrate site is built by Tyr-54 and Arg-57. An NAD(+)-binding site is contributed by 91 to 94 (QNID). The Proton acceptor role is filled by His-109. Cys-117 and Cys-136 together coordinate Zn(2+). NAD(+) is bound by residues 176-178 (GTS), 202-204 (NLQ), and Ala-220.

It belongs to the sirtuin family. Class III subfamily. Zn(2+) serves as cofactor.

Its subcellular location is the cytoplasm. It catalyses the reaction N(6)-acetyl-L-lysyl-[protein] + NAD(+) + H2O = 2''-O-acetyl-ADP-D-ribose + nicotinamide + L-lysyl-[protein]. It carries out the reaction N(6)-succinyl-L-lysyl-[protein] + NAD(+) + H2O = 2''-O-succinyl-ADP-D-ribose + nicotinamide + L-lysyl-[protein]. In terms of biological role, NAD-dependent lysine deacetylase and desuccinylase that specifically removes acetyl and succinyl groups on target proteins. Modulates the activities of several proteins which are inactive in their acylated form. This Shewanella oneidensis (strain ATCC 700550 / JCM 31522 / CIP 106686 / LMG 19005 / NCIMB 14063 / MR-1) protein is NAD-dependent protein deacylase.